The primary structure comprises 196 residues: ATP synthase subunit b 2 (196 aa).

The span at 1–18 (MVVAQAGAPAHPPAAHGA) shows a compositional bias: low complexity. A disordered region spans residues 1–33 (MVVAQAGAPAHPPAAHGAEAGHGEAAGGEHGGF). The helical transmembrane segment at 41-60 (FASQLIWLIVSFGALYFLMS) threads the bilayer.

Belongs to the ATPase B chain family. F-type ATPases have 2 components, F(1) - the catalytic core - and F(0) - the membrane proton channel. F(1) has five subunits: alpha(3), beta(3), gamma(1), delta(1), epsilon(1). F(0) has three main subunits: a(1), b(2) and c(10-14). The alpha and beta chains form an alternating ring which encloses part of the gamma chain. F(1) is attached to F(0) by a central stalk formed by the gamma and epsilon chains, while a peripheral stalk is formed by the delta and b chains.

The protein localises to the cell inner membrane. In terms of biological role, f(1)F(0) ATP synthase produces ATP from ADP in the presence of a proton or sodium gradient. F-type ATPases consist of two structural domains, F(1) containing the extramembraneous catalytic core and F(0) containing the membrane proton channel, linked together by a central stalk and a peripheral stalk. During catalysis, ATP synthesis in the catalytic domain of F(1) is coupled via a rotary mechanism of the central stalk subunits to proton translocation. Its function is as follows. Component of the F(0) channel, it forms part of the peripheral stalk, linking F(1) to F(0). The b'-subunit is a diverged and duplicated form of b found in plants and photosynthetic bacteria. The polypeptide is ATP synthase subunit b 2 (atpF2) (Azorhizobium caulinodans (strain ATCC 43989 / DSM 5975 / JCM 20966 / LMG 6465 / NBRC 14845 / NCIMB 13405 / ORS 571)).